Consider the following 167-residue polypeptide: uncharacterized protein (167 aa).

Residues 1–23 (MKRLHKRFLLATFCALFTATLQA) form the signal peptide. Cysteine 39 and cysteine 77 form a disulfide bridge.

It belongs to the fimbrial protein family.

Its subcellular location is the fimbrium. This is an uncharacterized protein from Escherichia coli (strain K12).